The primary structure comprises 619 residues: Transcription factor 7-like 2 (619 aa).

Residues 1-11 (MPQLNGGGGDD) show a composition bias toward gly residues. Positions 1 to 53 (MPQLNGGGGDDLGANDELISFKDEGEQEEKSSENSSAERDLADVKSSLVNESE) are CTNNB1-binding. Residues 1 to 96 (MPQLNGGGGD…AKRQDGGLFK (96 aa)) are disordered. Residues 19 to 43 (ISFKDEGEQEEKSSENSSAERDLAD) are compositionally biased toward basic and acidic residues. Lysine 22 is covalently cross-linked (Glycyl lysine isopeptide (Lys-Gly) (interchain with G-Cter in SUMO2)). Residues 47 to 57 (SLVNESETNQN) are compositionally biased toward polar residues. Basic and acidic residues predominate over residues 63–91 (EAERRPPPRSESFRDKSRESLEEAAKRQD). Phosphothreonine; by NLK occurs at positions 201 and 212. Positions 201–395 (TPLITYSNEH…RRWHALSREE (195 aa)) are mediates interaction with MAD2L2. Residues 318–328 (TVKQESSQSDV) show a composition bias toward polar residues. 4 disordered regions span residues 318-350 (TVKQESSQSDVGSLHSSKHQDSKKEEEKKKPHI), 420-441 (RDNYGKKKKRKRDKQPGETNEH), 496-547 (CLSP…AHLS), and 574-619 (DLPP…KSLE). Residue lysine 320 forms a Glycyl lysine isopeptide (Lys-Gly) (interchain with G-Cter in SUMO) linkage. The segment covering 335–346 (KHQDSKKEEEKK) has biased composition (basic and acidic residues). Residues 350-418 (IKKPLNAFML…LHMQLYPGWS (69 aa)) constitute a DNA-binding region (HMG box). Residues 425–430 (KKKKRK) carry the Nuclear localization signal motif. The promoter-specific activation domain stretch occupies residues 459–505 (SAPKKCRARFGLDQQNNWCGPCRRKKKCVRYIQGEGSCLSPPSSDGS). Low complexity predominate over residues 496–508 (CLSPPSSDGSLLD). Lysine 539 is covalently cross-linked (Glycyl lysine isopeptide (Lys-Gly) (interchain with G-Cter in SUMO2)). The segment covering 574 to 603 (DLPPAALQPAAPSSSIAQPSTSSLHSHSSL) has biased composition (low complexity). Positions 604–619 (AGTQPQPLSLVTKSLE) are enriched in polar residues.

It belongs to the TCF/LEF family. As to quaternary structure, interacts with TGFB1I1. Interacts with CTNNB1 (via the armadillo repeat); forms stable transcription complex. Interacts with EP300. Interacts with NLK. Interacts with CCDC85B (probably through the HMG box); prevents interaction with CTNNB1. Interacts with TNIK. Interacts with MAD2L2; prevents TCF7L2/TCF4 binding to promZIPK/DAPK3oters, negatively modulating its transcriptional activity. Interacts with ZIPK/DAPK3. Interacts with XIAP/BIRC4 and TLE3. Interacts with DDIT3/CHOP. The CTNNB1 and TCF7L2/TCF4 complex interacts with PML (isoform PML-4). Identified in a complex with CTNNB1 and FERMT2. Interacts with SPIN1. Interacts with C11orf84/SPINDOC in a SPIN1-dependent manner. Interacts with DAZAP2; the interaction results in localization of DAZAP2 to the nucleus. Post-translationally, in vitro, phosphorylated by TNIK. In terms of processing, phosphorylated at Thr-201 and/or Thr-212 by NLK. Phosphorylation by NLK at these sites inhibits DNA-binding by TCF7L2/TCF4, thereby preventing transcriptional activation of target genes of the canonical Wnt/beta-catenin signaling pathway. Polysumoylated. Sumoylation is enhanced by PIAS family members and desumoylation is enhanced by SENP2. Sumoylation/desumoylation regulates TCF7L2/TCF4 transcription activity in the Wnt/beta-catenin signaling pathway without altering interaction with CTNNB1 nor binding to DNA. Detected in epithelium from small intestine, with the highest expression at the top of the crypts and a gradient of expression from crypt to villus. Detected in colon epithelium and colon cancer, and in epithelium from mammary gland and carcinomas derived therefrom.

Its subcellular location is the nucleus. It localises to the PML body. Its function is as follows. Participates in the Wnt signaling pathway and modulates MYC expression by binding to its promoter in a sequence-specific manner. Acts as a repressor in the absence of CTNNB1, and as activator in its presence. Activates transcription from promoters with several copies of the Tcf motif 5'-CCTTTGATC-3' in the presence of CTNNB1. TLE1, TLE2, TLE3 and TLE4 repress transactivation mediated by TCF7L2/TCF4 and CTNNB1. Expression of dominant-negative mutants results in cell-cycle arrest in G1. Necessary for the maintenance of the epithelial stem-cell compartment of the small intestine. The polypeptide is Transcription factor 7-like 2 (TCF7L2) (Homo sapiens (Human)).